The chain runs to 638 residues: Nitrous-oxide reductase (638 aa).

A signal peptide (tat-type signal) is located at residues 1–52 (MSDKDSKNTPQVPEKLGLSRRGFLGASAVTGAAVAATALGGAVMTRESWAQA). Positions 129, 130, and 178 each coordinate Cu cation. Residues tyrosine 256, glutamate 259, methionine 267, aspartate 273, and asparagine 324 each coordinate Ca(2+). Cu cation contacts are provided by histidine 326, histidine 382, and histidine 433. Residues lysine 454 and glutamate 469 each contribute to the Ca(2+) site. Cu cation-binding residues include histidine 494, histidine 583, cysteine 618, tryptophan 620, cysteine 622, histidine 626, and methionine 629. The segment at 542–638 (NKVRVYMTSM…MVGRMMVEPA (97 aa)) is COX2-like.

Belongs to the NosZ family. This sequence in the C-terminal section; belongs to the cytochrome c oxidase subunit 2 family. Homodimer. Ca(2+) serves as cofactor. The cofactor is Cu cation. In terms of processing, predicted to be exported by the Tat system. The position of the signal peptide cleavage has not been experimentally proven. The N-terminus is blocked.

The protein resides in the periplasm. It catalyses the reaction N2 + 2 Fe(III)-[cytochrome c] + H2O = nitrous oxide + 2 Fe(II)-[cytochrome c] + 2 H(+). Its pathway is nitrogen metabolism; nitrate reduction (denitrification); dinitrogen from nitrate: step 4/4. Its function is as follows. Nitrous-oxide reductase is part of a bacterial respiratory system which is activated under anaerobic conditions in the presence of nitrate or nitrous oxide. The sequence is that of Nitrous-oxide reductase (nosZ) from Stutzerimonas stutzeri (Pseudomonas stutzeri).